A 217-amino-acid chain; its full sequence is uncharacterized protein (217 aa).

The first 32 residues, 1 to 32, serve as a signal peptide directing secretion; that stretch reads MPITKATPLFLRYRLKGFVFLTLLLVQGVFTA. Residue Cys33 is the site of N-palmitoyl cysteine attachment. Residue Cys33 is the site of S-diacylglycerol cysteine attachment.

This sequence belongs to the MG067/MG068/MG395 family.

The protein localises to the cell membrane. This is an uncharacterized protein from Mycoplasma pneumoniae (strain ATCC 29342 / M129 / Subtype 1) (Mycoplasmoides pneumoniae).